Here is a 226-residue protein sequence, read N- to C-terminus: Ribonuclease 3 (226 aa).

The RNase III domain maps to 7-129 (LPRLCRTLGY…IIGAIYLDSD (123 aa)). Residue E42 coordinates Mg(2+). The active site involves D46. D115 and E118 together coordinate Mg(2+). E118 is a catalytic residue. A DRBM domain is found at 156–226 (DAKTLLQEYL…AAQVLELLKK (71 aa)).

Belongs to the ribonuclease III family. In terms of assembly, homodimer. It depends on Mg(2+) as a cofactor.

It localises to the cytoplasm. It carries out the reaction Endonucleolytic cleavage to 5'-phosphomonoester.. Digests double-stranded RNA. Involved in the processing of primary rRNA transcript to yield the immediate precursors to the large and small rRNAs (23S and 16S). Processes some mRNAs, and tRNAs when they are encoded in the rRNA operon. Processes pre-crRNA and tracrRNA of type II CRISPR loci if present in the organism. In Shewanella sp. (strain W3-18-1), this protein is Ribonuclease 3.